Reading from the N-terminus, the 750-residue chain is Protein psiO (750 aa).

A signal peptide spans 1–22 (MKEKIKLSLLILTSIILAVANS). At 23–688 (QTQPKTLAMT…GCNTAAVVST (666 aa)) the chain is on the extracellular side. An N-linked (GlcNAc...) asparagine glycan is attached at asparagine 129. A PA14 domain is found at 140–286 (QEYFPINGKG…DDYCGVCNGD (147 aa)). N-linked (GlcNAc...) asparagine glycans are attached at residues asparagine 447, asparagine 506, asparagine 554, asparagine 571, and asparagine 659. The helical transmembrane segment at 689–709 (AVIAGVTVAAVVGLGIFLYGG) threads the bilayer. Topologically, residues 710-750 (KKGYDYYQDNKSKGMTGANSNPLYKESGNAGQNPLYNDNNL) are cytoplasmic. A disordered region spans residues 727-750 (ANSNPLYKESGNAGQNPLYNDNNL). Residues 738–750 (NAGQNPLYNDNNL) show a composition bias toward polar residues.

This sequence belongs to the prespore-cell-inducing factor family.

The protein resides in the membrane. In Dictyostelium discoideum (Social amoeba), this protein is Protein psiO (psiO).